Consider the following 356-residue polypeptide: Guanine nucleotide-binding protein alpha-2 subunit (356 aa).

The N-myristoyl glycine moiety is linked to residue glycine 2. Cysteine 4 carries S-palmitoyl cysteine lipidation. The G-alpha domain occupies 35–356 (REVKLLLLGA…LTNNLRDIVL (322 aa)). The G1 motif stretch occupies residues 38 to 51 (KLLLLGAGESGKST). Residues glutamate 46, serine 47, glycine 48, lysine 49, serine 50, threonine 51, aspartate 153, leucine 178, threonine 184, glycine 206, asparagine 272, lysine 273, aspartate 275, and alanine 329 each contribute to the GTP site. Serine 50 contacts Mg(2+). The interval 176-184 (DILRCRNKT) is G2 motif. Threonine 184 provides a ligand contact to Mg(2+). Residues 199 to 208 (YRIFDVGGQR) are G3 motif. The tract at residues 268–275 (ILFLNKVD) is G4 motif. Residues 327–332 (TNATDV) are G5 motif.

Belongs to the G-alpha family. G proteins are composed of 3 units; alpha, beta and gamma. The alpha chain contains the guanine nucleotide binding site. It depends on Mg(2+) as a cofactor.

Functionally, guanine nucleotide-binding proteins (G proteins) are involved as modulators or transducers in various transmembrane signaling systems. The sequence is that of Guanine nucleotide-binding protein alpha-2 subunit (GPA2) from Mycosarcoma maydis (Corn smut fungus).